A 309-amino-acid chain; its full sequence is Mitochondrial import receptor subunit TOM34 (309 aa).

Ser8 is subject to Phosphoserine. TPR repeat units follow at residues Val9–Gln42, Ser51–Ser84, and Lys86–Val118. The residue at position 160 (Ser160) is a Phosphoserine. The interval Leu161–Asp189 is disordered. Residues Glu164–Thr178 are compositionally biased toward basic and acidic residues. Ser186 is subject to Phosphoserine. 3 TPR repeats span residues Ala193–Glu226, Ser227–Asn260, and Lys262–Asn294. Lys197 participates in a covalent cross-link: Glycyl lysine isopeptide (Lys-Gly) (interchain with G-Cter in SUMO2).

This sequence belongs to the Tom34 family. In terms of assembly, interacts with HSP90A, VCP, ATP6V1D, KIAA0665, AMPK, and DMAP1 through its TPR repeat. Ubiquitous.

It localises to the cytoplasm. The protein resides in the mitochondrion outer membrane. Plays a role in the import of cytosolically synthesized preproteins into mitochondria. Binds the mature portion of precursor proteins. Interacts with cellular components, and possesses weak ATPase activity. May be a chaperone-like protein that helps to keep newly synthesized precursors in an unfolded import compatible state. The protein is Mitochondrial import receptor subunit TOM34 (TOMM34) of Homo sapiens (Human).